The following is a 390-amino-acid chain: GTPase Obg (390 aa).

The Obg domain occupies 1 to 159 (MKFIDESLIR…RDLLLELMLL (159 aa)). In terms of domain architecture, OBG-type G spans 160 to 333 (ADVGMLGLPN…LCRDIMDFII (174 aa)). GTP is bound by residues 166–173 (GLPNAGKS), 191–195 (FTTLV), 213–216 (DIPG), 283–286 (NKID), and 314–316 (SAA). Residues S173 and T193 each coordinate Mg(2+). Positions 363–382 (EHQFDDDEDWDDDWSEEDDE) are disordered. Residues 366 to 382 (FDDDEDWDDDWSEEDDE) show a composition bias toward acidic residues.

It belongs to the TRAFAC class OBG-HflX-like GTPase superfamily. OBG GTPase family. Monomer. It depends on Mg(2+) as a cofactor.

Its subcellular location is the cytoplasm. In terms of biological role, an essential GTPase which binds GTP, GDP and possibly (p)ppGpp with moderate affinity, with high nucleotide exchange rates and a fairly low GTP hydrolysis rate. Plays a role in control of the cell cycle, stress response, ribosome biogenesis and in those bacteria that undergo differentiation, in morphogenesis control. This is GTPase Obg from Haemophilus influenzae (strain ATCC 51907 / DSM 11121 / KW20 / Rd).